A 271-amino-acid chain; its full sequence is Carboxy-terminal domain RNA polymerase II polypeptide A small phosphatase 2 (271 aa).

Ser5 carries the phosphoserine modification. The region spanning 97-255 (EDQGRICVVI…LNLIPIFEEL (159 aa)) is the FCP1 homology domain. Asp107 functions as the 4-aspartylphosphate intermediate in the catalytic mechanism. Asp107, Asp109, and Asn218 together coordinate Mg(2+). The Proton donor role is filled by Asp109.

As to quaternary structure, monomer. Interacts with REST. Mg(2+) is required as a cofactor. As to expression, expression is restricted to non-neuronal tissues. Highest expression in pancreas and lowest in liver.

The protein resides in the nucleus. The catalysed reaction is O-phospho-L-seryl-[protein] + H2O = L-seryl-[protein] + phosphate. It catalyses the reaction O-phospho-L-threonyl-[protein] + H2O = L-threonyl-[protein] + phosphate. Its function is as follows. Preferentially catalyzes the dephosphorylation of 'Ser-5' within the tandem 7 residue repeats in the C-terminal domain (CTD) of the largest RNA polymerase II subunit POLR2A. Negatively regulates RNA polymerase II transcription, possibly by controlling the transition from initiation/capping to processive transcript elongation. Recruited by REST to neuronal genes that contain RE-1 elements, leading to neuronal gene silencing in non-neuronal cells. May contribute to the development of sarcomas. In Homo sapiens (Human), this protein is Carboxy-terminal domain RNA polymerase II polypeptide A small phosphatase 2 (CTDSP2).